Reading from the N-terminus, the 283-residue chain is Homeobox protein BarH-like 2 (283 aa).

Disordered regions lie at residues 107–141 (AAAAAAETPGGEALASSESETEQPTPRQKKPRRSR) and 198–283 (KGGQ…PPLS). Over residues 122–132 (SSESETEQPTP) the composition is skewed to polar residues. Residues 139-198 (RSRTIFTELQLMGLEKKFQKQKYLSTPDRLDLAQSLGLTQLQVKTWYQNRRMKWKKMVLK) constitute a DNA-binding region (homeobox). Low complexity predominate over residues 268 to 277 (QPQELSEASS).

The protein belongs to the BAR homeobox family. Nervous system, particularly in the telencephalon, spinal cord, and dorsal root ganglia.

Its subcellular location is the nucleus. Functionally, transcription factor. Binds optimally to the DNA consensus sequence 5'-YYTAATGRTTTTY-3'. May control the expression of neural adhesion molecules such as L1 or Ng-CAM during embryonic development of both the central and peripherical nervous system. May be involved in controlling adhesive processes in keratinizing epithelia. The protein is Homeobox protein BarH-like 2 (Barx2) of Mus musculus (Mouse).